The chain runs to 577 residues: Moesin (577 aa).

Positions P2–R295 constitute an FERM domain. Residue S74 is modified to Phosphoserine. An N6-acetyllysine modification is found at K79. N6-succinyllysine is present on K83. Positions I115 to E120 match the [IL]-x-C-x-x-[DE] motif motif. Y116 carries the phosphotyrosine modification. C117 carries the S-nitrosocysteine modification. N6-acetyllysine is present on residues K139 and K165. 3 disordered regions span residues L322–R342, T358–Q453, and S468–M549. A compositionally biased stretch (basic and acidic residues) spans T358–E401. S407 is modified (phosphoserine). 2 stretches are compositionally biased toward basic and acidic residues: residues K438–Q447 and A492–Q519. Position 527 is a phosphoserine (S527). The span at N531 to M549 shows a compositional bias: basic and acidic residues. Residue T558 is modified to Phosphothreonine; by ROCK2 and STK10.

In terms of assembly, in resting T-cells, part of a PAG1-NHERF1-MSN complex which is disrupted upon TCR activation. Interacts with NHERF1. Interacts with PPP1R16B. Interacts with PDZD8. Interacts with SELPLG and SYK; these interactions mediate the activation of SYK by SELPLG. Interacts with PDPN (via cytoplasmic domain); this interaction activates RHOA and promotes epithelial-mesenchymal transition. Interacts with SPN/CD43 cytoplasmic tail. Interacts with CD44. Interacts with ICAM2. Interacts with ICAM3 (via C-terminus). Interacts with PDZD8. Interacts with F-actin. Interacts with CD46. Interacts with PTPN6. Post-translationally, phosphorylation on Thr-558 is crucial for the formation of microvilli-like structures. Phosphorylation by ROCK2 suppresses the head-to-tail association of the N-terminal and C-terminal halves resulting in an opened conformation which is capable of actin and membrane-binding. Phosphorylation on Thr-558 by STK10 negatively regulates lymphocyte migration and polarization. S-nitrosylation of Cys-117 is induced by interferon-gamma and oxidatively-modified low-densitity lipoprotein (LDL(ox)) implicating the iNOS-S100A8/9 transnitrosylase complex.

It is found in the cell membrane. The protein localises to the cytoplasm. Its subcellular location is the cytoskeleton. The protein resides in the apical cell membrane. It localises to the cell projection. It is found in the microvillus membrane. The protein localises to the microvillus. With respect to regulation, a head-to-tail association, of the N-terminal and C-terminal halves results in a closed conformation (inactive form) which is incapable of actin or membrane-binding. Its function is as follows. Ezrin-radixin-moesin (ERM) family protein that connects the actin cytoskeleton to the plasma membrane and thereby regulates the structure and function of specific domains of the cell cortex. Tethers actin filaments by oscillating between a resting and an activated state providing transient interactions between moesin and the actin cytoskeleton. Once phosphorylated on its C-terminal threonine, moesin is activated leading to interaction with F-actin and cytoskeletal rearrangement. These rearrangements regulate many cellular processes, including cell shape determination, membrane transport, and signal transduction. The role of moesin is particularly important in immunity acting on both T and B-cells homeostasis and self-tolerance, regulating lymphocyte egress from lymphoid organs. Modulates phagolysosomal biogenesis in macrophages. Participates also in immunologic synapse formation. In Rattus norvegicus (Rat), this protein is Moesin.